Consider the following 127-residue polypeptide: MARITAEDCNKIIPDRFRLVVLATRYAKLLNYKVETNHIKKEKLDKPPVIALRRIAAGKVSVAQLEQDLINSLRTRTMIEPLVNQDESEAVEEKFEYLPEVYIGEDYSDLDDQIFIDEHGEDYETDK.

It belongs to the RNA polymerase subunit omega family. The RNAP catalytic core consists of 2 alpha, 1 beta, 1 beta' and 1 omega subunit. When a sigma factor is associated with the core the holoenzyme is formed, which can initiate transcription.

It carries out the reaction RNA(n) + a ribonucleoside 5'-triphosphate = RNA(n+1) + diphosphate. In terms of biological role, promotes RNA polymerase assembly. Latches the N- and C-terminal regions of the beta' subunit thereby facilitating its interaction with the beta and alpha subunits. This chain is DNA-directed RNA polymerase subunit omega, found in Rickettsia rickettsii (strain Iowa).